We begin with the raw amino-acid sequence, 114 residues long: Aspartate 1-decarboxylase (114 aa).

Catalysis depends on S25, which acts as the Schiff-base intermediate with substrate; via pyruvic acid. Pyruvic acid (Ser) is present on S25. T57 is a binding site for substrate. Y58 acts as the Proton donor in catalysis. Residue G71–A73 participates in substrate binding.

The protein belongs to the PanD family. As to quaternary structure, heterooctamer of four alpha and four beta subunits. Pyruvate is required as a cofactor. Post-translationally, is synthesized initially as an inactive proenzyme, which is activated by self-cleavage at a specific serine bond to produce a beta-subunit with a hydroxyl group at its C-terminus and an alpha-subunit with a pyruvoyl group at its N-terminus.

The protein resides in the cytoplasm. The enzyme catalyses L-aspartate + H(+) = beta-alanine + CO2. It participates in cofactor biosynthesis; (R)-pantothenate biosynthesis; beta-alanine from L-aspartate: step 1/1. Catalyzes the pyruvoyl-dependent decarboxylation of aspartate to produce beta-alanine. In Campylobacter hominis (strain ATCC BAA-381 / DSM 21671 / CCUG 45161 / LMG 19568 / NCTC 13146 / CH001A), this protein is Aspartate 1-decarboxylase.